A 474-amino-acid polypeptide reads, in one-letter code: MTNPIHIVGGGLAGSEAAWQIAQGGRRAVLHEMRPRRGTEAHQGEGLAELVCSNSFRSDDANGNAVGLLHQEMRSLNSLIMRAADANQVPAGGALAVDREGFSQAVTAALEEHPNVTILREEVAGLPPETWGSTILATGPLTSPALAEAVGALTGRDALAFFDAIAPIVHRDSIDMGKAWFQSRYDKAGPGGTGADYLNCPMDREQYEAFVAALIAGEKTTFKEWEATTPYFDGCLPIEVMAERGPETLRHGPMKPVGLTNPHNPTVKAYAIVQLRQDNALGTLFNMVGFQTKLRHAEQVRIFRTIPGLENAEFARLGGLHRNTYLDSPRLLDATLRLRARPQLRFAGQITGCEGYVESAAVGLMAGRYALAEAEGTTLAPLPPTTALGALIGHITGGHLEASEDAGANAPRSFQPMNVNFGLFPPLERMPRNETGKRLRGPEKAALKKRALTDRAREDLAAWIGGEDLPHAAE.

9–14 (GGGLAG) is an FAD binding site. The disordered stretch occupies residues 425–451 (PPLERMPRNETGKRLRGPEKAALKKRA). Over residues 429–451 (RMPRNETGKRLRGPEKAALKKRA) the composition is skewed to basic and acidic residues.

Belongs to the MnmG family. TrmFO subfamily. The cofactor is FAD.

The protein resides in the cytoplasm. The enzyme catalyses uridine(54) in tRNA + (6R)-5,10-methylene-5,6,7,8-tetrahydrofolate + NADH + H(+) = 5-methyluridine(54) in tRNA + (6S)-5,6,7,8-tetrahydrofolate + NAD(+). It carries out the reaction uridine(54) in tRNA + (6R)-5,10-methylene-5,6,7,8-tetrahydrofolate + NADPH + H(+) = 5-methyluridine(54) in tRNA + (6S)-5,6,7,8-tetrahydrofolate + NADP(+). Its function is as follows. Catalyzes the folate-dependent formation of 5-methyl-uridine at position 54 (M-5-U54) in all tRNAs. The protein is Methylenetetrahydrofolate--tRNA-(uracil-5-)-methyltransferase TrmFO of Methylorubrum populi (strain ATCC BAA-705 / NCIMB 13946 / BJ001) (Methylobacterium populi).